The chain runs to 359 residues: Type-1 angiotensin II receptor (359 aa).

At 1–25 the chain is on the extracellular side; that stretch reads MILNSSTEDGIKRIQDDCPKAGRHN. Residue Asn4 is glycosylated (N-linked (GlcNAc...) (complex) asparagine). Angiotensin II contacts are provided by Gln15 and Asp17. Cystine bridges form between Cys18–Cys274 and Cys101–Cys180. The chain crosses the membrane as a helical span at residues 26–55; sequence YIFVMIPTLYSIIFVVGIFGNSLVVIVIYF. Over 56–61 the chain is Cytoplasmic; it reads YMKLKT. The chain crosses the membrane as a helical span at residues 62-89; the sequence is VASVFLLNLALADLCFLLTLPLWAVYTA. Residues 90–98 are Extracellular-facing; the sequence is MEYRWPFGN. Residues 99 to 125 form a helical membrane-spanning segment; that stretch reads YLCKIASASVSFNLYASVFLLTCLSID. Residues 126-141 lie on the Cytoplasmic side of the membrane; sequence RYLAIVHPMKSRLRRT. Residues 142 to 165 traverse the membrane as a helical segment; that stretch reads MLVAKVTCIIIWLLAGLASLPAII. The Extracellular portion of the chain corresponds to 166 to 190; sequence HRNVFFIENTNITVCAFHYESQNST. Arg167 lines the angiotensin II pocket. N-linked (GlcNAc...) asparagine glycosylation is present at Asn176. Phe182, His183, and Tyr184 together coordinate angiotensin II. The N-linked (GlcNAc...) asparagine glycan is linked to Asn188. The helical transmembrane segment at 191-216 threads the bilayer; the sequence is LPIGLGLTKNILGFLFPFLIILTSYT. Lys199 serves as a coordination point for angiotensin II. Residues 217-239 lie on the Cytoplasmic side of the membrane; sequence LIWKALKKAYEIQKNKPRNDDIF. Residues 240-268 traverse the membrane as a helical segment; sequence KIIMAIVLFFFFSWIPHQIFTFLDVLIQL. Residues 269-278 lie on the Extracellular side of the membrane; that stretch reads GIIRDCRIAD. The chain crosses the membrane as a helical span at residues 279 to 304; that stretch reads IVDTAMPITICIAYFNNCLNPLFYGF. The Cytoplasmic portion of the chain corresponds to 305 to 359; that stretch reads LGKKFKRYFLQLLKYIPPKAKSHSNLSTKMSTLSYRPSDNVSSSTKKPAPCFEVE. Polar residues predominate over residues 335–350; the sequence is STLSYRPSDNVSSSTK. Residues 335-359 form a disordered region; the sequence is STLSYRPSDNVSSSTKKPAPCFEVE. Cys355 carries S-palmitoyl cysteine lipidation.

Belongs to the G-protein coupled receptor 1 family. In terms of assembly, interacts with MAS1. Interacts with ARRB1. Interacts with FLNA (via filamin repeat 21); increases PKA-mediated phosphorylation of FLNA. Post-translationally, C-terminal Ser or Thr residues may be phosphorylated. In terms of tissue distribution, liver, lung, adrenal and adrenocortical adenomas.

It localises to the cell membrane. Strongly inhibited by anti-hypertensive drugs losartan, candesartan, valsartan, irbesartan, telmisartan, eprosartan, olmesartan and azilsartan, most of which share a common biphenyl-tetrazole scaffold. Its function is as follows. Receptor for angiotensin II, a vasoconstricting peptide, which acts as a key regulator of blood pressure and sodium retention by the kidney. The activated receptor in turn couples to G-alpha proteins G(q) (GNAQ, GNA11, GNA14 or GNA15) and thus activates phospholipase C and increases the cytosolic Ca(2+) concentrations, which in turn triggers cellular responses such as stimulation of protein kinase C. (Microbial infection) During SARS coronavirus-2/SARS-CoV-2 infection, it is able to recognize and internalize the complex formed by secreted ACE2 and SARS-CoV-2 spike protein through DNM2/dynamin 2-dependent endocytosis. This Homo sapiens (Human) protein is Type-1 angiotensin II receptor.